The following is a 139-amino-acid chain: Large-conductance mechanosensitive channel (139 aa).

Transmembrane regions (helical) follow at residues 14-34 (VVDM…VKSL) and 86-106 (GLFI…FLLI).

Belongs to the MscL family. In terms of assembly, homopentamer.

It is found in the cell inner membrane. Functionally, channel that opens in response to stretch forces in the membrane lipid bilayer. May participate in the regulation of osmotic pressure changes within the cell. The sequence is that of Large-conductance mechanosensitive channel from Methylobacillus flagellatus (strain ATCC 51484 / DSM 6875 / VKM B-1610 / KT).